Reading from the N-terminus, the 501-residue chain is Lysine--tRNA ligase (501 aa).

Residues aspartate 411 and glutamate 418 each contribute to the Mg(2+) site.

This sequence belongs to the class-II aminoacyl-tRNA synthetase family. As to quaternary structure, homodimer. Requires Mg(2+) as cofactor.

It localises to the cytoplasm. The catalysed reaction is tRNA(Lys) + L-lysine + ATP = L-lysyl-tRNA(Lys) + AMP + diphosphate. The polypeptide is Lysine--tRNA ligase (Mycolicibacterium gilvum (strain PYR-GCK) (Mycobacterium gilvum (strain PYR-GCK))).